The sequence spans 88 residues: HssA/B-like protein 6 (88 aa).

The disordered stretch occupies residues 1–22 (MSILSALTSISNPMKSSNSNVA).

Belongs to the hssA/B family.

This is HssA/B-like protein 6 (hssl6) from Dictyostelium discoideum (Social amoeba).